Reading from the N-terminus, the 647-residue chain is Zinc finger CCCH domain-containing protein 19 (647 aa).

C3H1-type zinc fingers lie at residues 16-45 (RRRSTDCIYFLASPLTCKKGSECEYRHSDA) and 47-73 (RMNPRDCWYWFNGNCANPKCSFRHPPL). Positions 78-106 (GAPTTPRTSQQSAPQVSVPAQAPVPNPAS) are disordered. The segment covering 86–106 (SQQSAPQVSVPAQAPVPNPAS) has biased composition (low complexity). The segment at 109–136 (AKQGVPCYYFQKGMCVKGDRCAFLHLPQ) adopts a C3H1-type 3 zinc-finger fold. Disordered stretches follow at residues 155-280 (VPHP…RTNG), 308-327 (LSESRFSQREPMPLTADSSD), 335-452 (QRRL…DAES), 512-580 (LKRK…LSPA), and 586-605 (EAADDASRELEEQQDVETAE). Composition is skewed to polar residues over residues 160-175 (LKNSWTKPNSSAQQNA) and 189-203 (NGKTAQKQNLTNRAG). The segment covering 267-280 (SLREDRGAYRRTNG) has biased composition (basic and acidic residues). A compositionally biased stretch (basic and acidic residues) spans 347–359 (SDRHNVYPEDERH). The segment covering 369–379 (QASNDGVSSSR) has biased composition (polar residues). A compositionally biased stretch (basic and acidic residues) spans 419–433 (LRGKLHDRLKAKPNE). A compositionally biased stretch (polar residues) spans 435–445 (VSGNVQSSLSK). Basic and acidic residues predominate over residues 527–536 (GSKREEHSGG).

This is Zinc finger CCCH domain-containing protein 19 from Oryza sativa subsp. japonica (Rice).